We begin with the raw amino-acid sequence, 164 residues long: Large ribosomal subunit protein uL23 (164 aa).

Positions 1 to 41 are disordered; it reads MPAKAASAAASKKNSAPKSAVSKKVAKKGAPAAAAKPTKVV.

It belongs to the universal ribosomal protein uL23 family.

This protein binds to a specific region on the 26S rRNA. This is Large ribosomal subunit protein uL23 (RPL23A) from Trypanosoma brucei brucei.